The following is a 197-amino-acid chain: Probable chorismate pyruvate-lyase (197 aa).

The substrate site is built by R77, L115, and E176.

Belongs to the UbiC family.

The protein resides in the cytoplasm. The enzyme catalyses chorismate = 4-hydroxybenzoate + pyruvate. The protein operates within cofactor biosynthesis; ubiquinone biosynthesis. Its function is as follows. Removes the pyruvyl group from chorismate, with concomitant aromatization of the ring, to provide 4-hydroxybenzoate (4HB) for the ubiquinone pathway. The protein is Probable chorismate pyruvate-lyase of Burkholderia ambifaria (strain ATCC BAA-244 / DSM 16087 / CCUG 44356 / LMG 19182 / AMMD) (Burkholderia cepacia (strain AMMD)).